The chain runs to 105 residues: Small ribosomal subunit protein bS18 (105 aa).

The segment covering 1-10 has biased composition (polar residues); the sequence is MAEETNQQAP. Positions 1–34 are disordered; the sequence is MAEETNQQAPESGASSSQPTSRPSGPRGGSGGRK. Over residues 12 to 25 the composition is skewed to low complexity; the sequence is SGASSSQPTSRPSG.

Belongs to the bacterial ribosomal protein bS18 family. As to quaternary structure, part of the 30S ribosomal subunit. Forms a tight heterodimer with protein bS6.

In terms of biological role, binds as a heterodimer with protein bS6 to the central domain of the 16S rRNA, where it helps stabilize the platform of the 30S subunit. This Acidobacterium capsulatum (strain ATCC 51196 / DSM 11244 / BCRC 80197 / JCM 7670 / NBRC 15755 / NCIMB 13165 / 161) protein is Small ribosomal subunit protein bS18.